Consider the following 148-residue polypeptide: Large ribosomal subunit protein uL15 (148 aa).

The interval 1–51 (MNLSSLKPAEGAVKSRKRIGRGPGSGLGGTSTRGHKGAKSRSGYSKKIGFE) is disordered. The span at 21 to 31 (RGPGSGLGGTS) shows a compositional bias: gly residues.

The protein belongs to the universal ribosomal protein uL15 family. As to quaternary structure, part of the 50S ribosomal subunit.

In terms of biological role, binds to the 23S rRNA. The protein is Large ribosomal subunit protein uL15 of Porphyromonas gingivalis (strain ATCC BAA-308 / W83).